A 208-amino-acid polypeptide reads, in one-letter code: Protein GrpE (208 aa).

The segment covering Met-1 to Ser-25 has biased composition (basic and acidic residues). Residues Met-1–Ser-38 form a disordered region. Acidic residues predominate over residues Asn-29–Ser-38.

Belongs to the GrpE family. As to quaternary structure, homodimer.

Its subcellular location is the cytoplasm. Functionally, participates actively in the response to hyperosmotic and heat shock by preventing the aggregation of stress-denatured proteins, in association with DnaK and GrpE. It is the nucleotide exchange factor for DnaK and may function as a thermosensor. Unfolded proteins bind initially to DnaJ; upon interaction with the DnaJ-bound protein, DnaK hydrolyzes its bound ATP, resulting in the formation of a stable complex. GrpE releases ADP from DnaK; ATP binding to DnaK triggers the release of the substrate protein, thus completing the reaction cycle. Several rounds of ATP-dependent interactions between DnaJ, DnaK and GrpE are required for fully efficient folding. The protein is Protein GrpE of Clostridium perfringens (strain SM101 / Type A).